A 256-amino-acid chain; its full sequence is Triosephosphate isomerase (256 aa).

9–11 lines the substrate pocket; the sequence is NWK. Histidine 97 acts as the Electrophile in catalysis. The active-site Proton acceptor is glutamate 169. Residues glycine 175, serine 214, and 235 to 236 each bind substrate; that span reads GG.

It belongs to the triosephosphate isomerase family. Homodimer.

It localises to the cytoplasm. The enzyme catalyses D-glyceraldehyde 3-phosphate = dihydroxyacetone phosphate. It functions in the pathway carbohydrate biosynthesis; gluconeogenesis. The protein operates within carbohydrate degradation; glycolysis; D-glyceraldehyde 3-phosphate from glycerone phosphate: step 1/1. In terms of biological role, involved in the gluconeogenesis. Catalyzes stereospecifically the conversion of dihydroxyacetone phosphate (DHAP) to D-glyceraldehyde-3-phosphate (G3P). The chain is Triosephosphate isomerase from Vibrio vulnificus (strain CMCP6).